Reading from the N-terminus, the 731-residue chain is Penicillin-binding protein 2a (731 aa).

Residues 1–56 (MKLDKLFEKFLSLFKKETSELEDSDSTILRRSRSDRKKLAQVGPIRKFWRRYHLTK) are Cytoplasmic-facing. The chain crosses the membrane as a helical; Signal-anchor for type II membrane protein span at residues 57 to 77 (IILILGLSAGLLVGIYLFAVA). Residues 78-156 (KSTNVNDLQN…FLAIVTAGRS (79 aa)) are hydrophobic; associated with cytoplasmic membrane. Required for transglycosylase activity, but not for lipid II binding. The interval 78 to 300 (KSTNVNDLQN…SQLHDKYEGK (223 aa)) is transglycosylase. The Extracellular portion of the chain corresponds to 78-731 (KSTNVNDLQN…IWDSIVNLFR (654 aa)). Catalysis depends on E131, which acts as the Proton donor; for transglycosylase activity. Positions 301–731 (ISDYRYPSYF…IWDSIVNLFR (431 aa)) are transpeptidase. S410 functions as the Acyl-ester intermediate; for transpeptidase activity in the catalytic mechanism. The tract at residues 674–694 (ANTKRQVQTNDNSQTDDNLSD) is disordered. A compositionally biased stretch (polar residues) spans 676 to 690 (TKRQVQTNDNSQTDD).

This sequence in the N-terminal section; belongs to the glycosyltransferase 51 family. The protein in the C-terminal section; belongs to the transpeptidase family. As to quaternary structure, homodimer. May also form higher order oligomers. Self-association may depend on its transmembrane and/or cytoplasmic regions. Interacts with MacP; interaction is required for the function of this protein.

The protein localises to the cell membrane. Its subcellular location is the secreted. The protein resides in the cell wall. The catalysed reaction is Preferential cleavage: (Ac)2-L-Lys-D-Ala-|-D-Ala. Also transpeptidation of peptidyl-alanyl moieties that are N-acyl substituents of D-alanine.. The enzyme catalyses [GlcNAc-(1-&gt;4)-Mur2Ac(oyl-L-Ala-gamma-D-Glu-L-Lys-D-Ala-D-Ala)](n)-di-trans,octa-cis-undecaprenyl diphosphate + beta-D-GlcNAc-(1-&gt;4)-Mur2Ac(oyl-L-Ala-gamma-D-Glu-L-Lys-D-Ala-D-Ala)-di-trans,octa-cis-undecaprenyl diphosphate = [GlcNAc-(1-&gt;4)-Mur2Ac(oyl-L-Ala-gamma-D-Glu-L-Lys-D-Ala-D-Ala)](n+1)-di-trans,octa-cis-undecaprenyl diphosphate + di-trans,octa-cis-undecaprenyl diphosphate + H(+). It participates in cell wall biogenesis; peptidoglycan biosynthesis. Its function is as follows. Cell wall formation. Synthesis of cross-linked peptidoglycan (PG) from the lipid intermediates. Binds dansylated lipid II and catalyzes the polymerization of glycan chains. Hydrolyzes S2d (N-benzoyl-D-alanylmercaptoacetic acid) molecule, a synthetic thiolester analog of cell wall stem peptide. Active against bocillin, a fluorescent penicillin. No transpeptidase activity with non-fluorescent lysine-containing lipid II as substrate. This Streptococcus pneumoniae serotype 2 (strain D39 / NCTC 7466) protein is Penicillin-binding protein 2a.